A 499-amino-acid chain; its full sequence is Glycerol kinase (499 aa).

Threonine 13 lines the ADP pocket. Threonine 13, threonine 14, and serine 15 together coordinate ATP. Threonine 13 contributes to the sn-glycerol 3-phosphate binding site. Position 17 (arginine 17) interacts with ADP. Sn-glycerol 3-phosphate is bound by residues arginine 83, glutamate 84, tyrosine 135, and aspartate 244. Glycerol is bound by residues arginine 83, glutamate 84, tyrosine 135, aspartate 244, and glutamine 245. Residues threonine 266 and glycine 309 each contribute to the ADP site. Residues threonine 266, glycine 309, glutamine 313, and glycine 410 each contribute to the ATP site. Residues glycine 410 and asparagine 414 each contribute to the ADP site.

It belongs to the FGGY kinase family.

It carries out the reaction glycerol + ATP = sn-glycerol 3-phosphate + ADP + H(+). It functions in the pathway polyol metabolism; glycerol degradation via glycerol kinase pathway; sn-glycerol 3-phosphate from glycerol: step 1/1. Inhibited by fructose 1,6-bisphosphate (FBP). In terms of biological role, key enzyme in the regulation of glycerol uptake and metabolism. Catalyzes the phosphorylation of glycerol to yield sn-glycerol 3-phosphate. In Paraburkholderia phymatum (strain DSM 17167 / CIP 108236 / LMG 21445 / STM815) (Burkholderia phymatum), this protein is Glycerol kinase.